The primary structure comprises 720 residues: MLINLSAVWAAFALSGVLAPPTWPASIDELEDLMFLNTGYHARGFSAGVTPCSFSQQGPSRVASAEWVRTAFHDMATGNSFTGVGGLDASIVFELGGKGGENIGAGFNTTLETYTPFFSTRSSMADLIALGVYTAVRSCGGPVVQVRTGRIDATARGPIGVPQPENSQGTFINQFTRMGFNVSDMIAVTACGHTMGGVHASNFPQIVVPGSAPNDFQLFDSTVSFDEKVAVDFVGGVAGNPLTSTTAKRSQRDADMKVFTADRNVTIKALADQVTFRSTCARVLQKMIEVVPSGVNLTAPIAPYEVKPGRLQLSLASNGSTIAFTGEIRVRTTSRPVTSISKVELVYKDRTGGSSCGSCIITTEYKGTAEGFDDSFAFYGFEARFPVETAISKFNVRVVLNTGETVVYNNNDEEDDNRLIISQKVRKNANTGSVKLSVTTKTPRSCCVTPALTTQSVPMSPQTTVGPYTLYAGNLTLAAAYRSNAKFDVSLTSGGAVISDSFKNTADLSSTCAPFGSNDPTMPDYTFDGCYTDTPESRALTSAAFVKENMTIAACSSLCKGYQFFGLEYGTECYCGDTRSNSSMQAPKSECNQPCGGDSSETCGAGYRIAIYKDDKWVPITSPQIPGYNYTGCYSDSPSNRTLSGSFTYNEKMTVELCASFCNGTKYFGVEYFSECYCGANMFPGSTIQPESDCGFFFSANKTQHCGGSNRINIYTKLDM.

An N-terminal signal peptide occupies residues methionine 1–proline 24. N-linked (GlcNAc...) asparagine glycans are attached at residues asparagine 4, asparagine 108, asparagine 181, asparagine 264, asparagine 296, asparagine 318, asparagine 474, asparagine 549, asparagine 581, asparagine 629, asparagine 640, asparagine 663, and asparagine 701. 2 consecutive WSC domains span residues aspartate 524–aspartate 615 and glycine 627–leucine 718.

Belongs to the WSCD family.

The protein resides in the secreted. The protein is WSC domain-containing protein ARB_07870 of Arthroderma benhamiae (strain ATCC MYA-4681 / CBS 112371) (Trichophyton mentagrophytes).